The primary structure comprises 351 residues: Palmitoyltransferase spe-10 (351 aa).

4 consecutive transmembrane segments (helical) span residues 21-43, 60-80, 198-218, and 241-261; these read TGWI…LWWS, IQAT…MWSL, YFLL…LTSL, and LFSF…LIIF. A DHHC domain is found at 154 to 204; sequence KYCYECGHIKPDRARHCSSCGKCCIKYDHHCPWINMCVTHVNYKYFLLYII.

The protein belongs to the DHHC palmitoyltransferase family. As to expression, expressed during spermatogenesis in budding and budded spermatids.

It is found in the membrane. It carries out the reaction L-cysteinyl-[protein] + hexadecanoyl-CoA = S-hexadecanoyl-L-cysteinyl-[protein] + CoA. Involved in spermatogenesis, specifically in the morphogenesis of fibrous body-membranous organelles (FB-MO), which are Golgi-derived organelles used for transporting sperm-specific components, in spermatocytes and in their localization into budding spermatids. Required for the proper formation of spermatids and spermatozoa. This is Palmitoyltransferase spe-10 from Caenorhabditis elegans.